A 442-amino-acid polypeptide reads, in one-letter code: Glutamate-1-semialdehyde 2,1-aminomutase (442 aa).

Lys-282 carries the post-translational modification N6-(pyridoxal phosphate)lysine.

It belongs to the class-III pyridoxal-phosphate-dependent aminotransferase family. HemL subfamily. As to quaternary structure, homodimer. Pyridoxal 5'-phosphate is required as a cofactor.

Its subcellular location is the cytoplasm. It carries out the reaction (S)-4-amino-5-oxopentanoate = 5-aminolevulinate. It participates in porphyrin-containing compound metabolism; protoporphyrin-IX biosynthesis; 5-aminolevulinate from L-glutamyl-tRNA(Glu): step 2/2. The chain is Glutamate-1-semialdehyde 2,1-aminomutase from Polaromonas sp. (strain JS666 / ATCC BAA-500).